Here is a 1679-residue protein sequence, read N- to C-terminus: Protein MLP2 (1679 aa).

Coiled coils occupy residues 32-176 (AKFE…KYDT), 233-466 (YNKF…RQVK), 516-1064 (FSNV…EREL), and 1099-1491 (KLVS…ENAG). 3 consecutive short sequence motifs (bipartite nuclear localization signal) follow at residues 417–433 (KRST…KRKQ), 639–655 (RKEL…KKTT), and 1433–1449 (KKEW…RRIK). Disordered regions lie at residues 1495 to 1521 (FLDN…SERP) and 1632 to 1679 (DLTN…ASNE). Polar residues-rich tracts occupy residues 1511–1520 (NSPSKGNSER) and 1646–1661 (IGST…TSSD). S1512 is subject to Phosphoserine. Residues 1662 to 1671 (PDTKKVKESP) show a composition bias toward basic and acidic residues. Position 1670 is a phosphoserine (S1670).

In terms of assembly, component of the nuclear complex (NPC). NPC constitutes the exclusive means of nucleocytoplasmic transport. NPCs allow the passive diffusion of ions and small molecules and the active, nuclear transport receptor-mediated bidirectional transport of macromolecules such as proteins, RNAs, ribonucleoparticles (RNPs), and ribosomal subunits across the nuclear envelope. Due to its 8-fold rotational symmetry, all subunits are present with 8 copies or multiples thereof. Interacts with NUP60 and NIC96, which tether it to the nuclear pore complex. Component of the spindle pole body core in which it interacts directly with SPC110, SPC42 and SPC29. Also interacts with YKU70 (HDF1) and MLP1.

Its subcellular location is the nucleus. It is found in the cytoplasm. It localises to the cytoskeleton. The protein resides in the microtubule organizing center. The protein localises to the spindle pole body. Its subcellular location is the nuclear pore complex. Functionally, together with the closely related MLP1, involved in the structural and functional organization of perinuclear chromatin. MLP1/MLP2 associate with the nuclear pore complex and form filamentous structures along the nuclear periphery. Has a role in the localization of Esc1 to nucleolar regions. Together with MLP1, mediates tethering of the some telomeres to the nuclear periphery, probably mediated by YKU70/YKU80 (HDF1/HDF2) heterodimer and show perinuclear location dependent silencing. MLP1 and MLP2 are involved in telomere length regulation but not silencing or telomere anchoring. Plays a role in the incorporation of components into the spindle pole body. Involved in double-strand break repair, probably also mediated by the YKU70/YKU80 (HDF1/HDF2) heterodimer. This is Protein MLP2 (MLP2) from Saccharomyces cerevisiae (strain ATCC 204508 / S288c) (Baker's yeast).